Reading from the N-terminus, the 269-residue chain is Histone deacetylase HDT1 (269 aa).

Residues 97-269 are disordered; that stretch reads PFEEEEDDED…HSKAKHSAGK (173 aa). Composition is skewed to acidic residues over residues 98–115 and 153–179; these read FEEE…DEDI and KDDE…DSEE. Polar residues predominate over residues 228–238; sequence PSKQASKTPKS. The C2H2-type zinc finger occupies 242–265; that stretch reads HHCKPCNRSFGSEGALDSHSKAKH.

Belongs to the histone deacetylase HD2 family. Predominantly expressed in ovaries. Accumulates predominantly in the micropylar region of the ovule's integument.

The protein resides in the nucleus. The protein localises to the nucleolus. In terms of biological role, mediates the deacetylation of lysine residues on the N-terminal part of the core histones (H2A, H2B, H3 and H4). Histone deacetylation gives a tag for epigenetic repression and plays an important role in transcriptional regulation, cell cycle progression and developmental events. This is Histone deacetylase HDT1 (HDT1) from Solanum chacoense (Chaco potato).